We begin with the raw amino-acid sequence, 408 residues long: SERPINE1 mRNA-binding protein 1 (408 aa).

A Phosphoserine modification is found at S25. Disordered regions lie at residues 33–292 (AAEN…TLDE) and 328–408 (SKSE…PALA). The segment covering 51 to 68 (AKSAAQAAAQTNSNAAGK) has biased composition (low complexity). K52 carries the post-translational modification N6-acetyllysine; alternate. Residue K52 forms a Glycyl lysine isopeptide (Lys-Gly) (interchain with G-Cter in SUMO1); alternate linkage. K68 bears the N6-acetyllysine mark. 3 stretches are compositionally biased toward basic and acidic residues: residues 70–80 (LRKESQKDRKN), 89–114 (VDKKEETQPPVALKKEGIRRVGRRPD), and 122–162 (KIID…DRPI). K102 participates in a covalent cross-link: Glycyl lysine isopeptide (Lys-Gly) (interchain with G-Cter in SUMO1); alternate. K102 is covalently cross-linked (Glycyl lysine isopeptide (Lys-Gly) (interchain with G-Cter in SUMO2); alternate). An N6-acetyllysine mark is found at K122 and K140. The segment covering 164 to 182 (GRGGLGRGRGGRGRGMGRG) has biased composition (gly residues). Omega-N-methylarginine is present on residues R165 and R188. Over residues 183–199 (DGFDSRGKREFDRHSGS) the composition is skewed to basic and acidic residues. Position 197 is a phosphoserine (S197). S199 bears the Phosphoserine; by MTOR mark. Phosphoserine is present on residues S203, S205, and S208. At K211 the chain carries N6-acetyllysine; alternate. A Glycyl lysine isopeptide (Lys-Gly) (interchain with G-Cter in SUMO2); alternate cross-link involves residue K211. R216 is modified (omega-N-methylarginine). The residue at position 221 (S221) is a Phosphoserine. Residue H222 forms a Glycyl lysine isopeptide (Lys-Gly) (interchain with G-Cter in SUMO2) linkage. The residue at position 226 (T226) is a Phosphothreonine; by MTOR. K228 is covalently cross-linked (Glycyl lysine isopeptide (Lys-Gly) (interchain with G-Cter in SUMO1); alternate). Residue K228 forms a Glycyl lysine isopeptide (Lys-Gly) (interchain with G-Cter in SUMO2); alternate linkage. K228 is covalently cross-linked (Glycyl lysine isopeptide (Lys-Gly) (interchain with G-Cter in SUMO2)). Residues L231, S234, and Y237 each carry the phosphoserine modification. S234 is modified (phosphothreonine). K240 is modified (phosphothreonine). Residues 240–253 (KQISYNYSDLDQSN) are compositionally biased toward polar residues. Over residues 261 to 275 (GEEHHPVADTENKEN) the composition is skewed to basic and acidic residues. A Glycyl lysine isopeptide (Lys-Gly) (interchain with G-Cter in SUMO1); alternate cross-link involves residue K281. Residue K281 forms a Glycyl lysine isopeptide (Lys-Gly) (interchain with G-Cter in SUMO2); alternate linkage. Basic and acidic residues-rich tracts occupy residues 282 to 292 (EEGPKEMTLDE) and 328 to 342 (SKSEEAHAEDSVMDH). K329 is subject to N6-acetyllysine. The residue at position 330 (S330) is a Phosphoserine. Residues 363-372 (GRPGRGGRGG) show a composition bias toward gly residues. Omega-N-methylarginine is present on residues R364, R367, and R370. Phosphoserine occurs at positions 392 and 394.

This sequence belongs to the SERBP1-HABP4 family. Associates with mature 80S ribosomes. Interacts with EEF2/eEF2; interaction sequesters EEF2/eEF2 at the A-site of the ribosome, thereby blocking the interaction sites of the mRNA-tRNA complex, promoting ribosome stabilization and hibernation. Interacts with SPIN1. Interacts with CHD3 and TDRD3. Interacts with ZDHHC17 (via ANK repeats). Phosphorylation by MTOR inhibits SERBP1 and relieves ribosome hibernation. In terms of tissue distribution, expressed at high level in the heart, skeletal muscle and kidney, and at low levels in placenta, liver and brain.

Its subcellular location is the cytoplasm. The protein localises to the nucleus. The protein resides in the perinuclear region. In terms of biological role, ribosome-binding protein that promotes ribosome hibernation, a process during which ribosomes are stabilized in an inactive state and preserved from proteasomal degradation. Acts via its association with EEF2/eEF2 factor, sequestering EEF2/eEF2 at the A-site of the ribosome and promoting ribosome stabilization and storage in an inactive state. May also play a role in the regulation of mRNA stability: binds to the 3'-most 134 nt of the SERPINE1/PAI1 mRNA, a region which confers cyclic nucleotide regulation of message decay. Seems to play a role in PML-nuclear bodies formation. This is SERPINE1 mRNA-binding protein 1 from Homo sapiens (Human).